Here is a 330-residue protein sequence, read N- to C-terminus: MADLIARLREDGIQKRVIQEGRGELPDFQDGTKATFHFRTLHSDNEGSVIDDSRTRGKPMELIVGKKFKLPVWETIVCTMREGEIAQFLCDIKHVVLYPLVAKSLRNIAEGKDPLEGQRHCCGIAQMHEHSSLGHADLDALQQNPQPLIFHIEMLKVESPGTYQQDPWAMTDEEKAKAVPVIHQEGNRLYREGQVKEAAAKYYDAIACLKNLQMKEQPGSPDWIQLDLQITPLLLNYCQCKLVAQEYYEVLDHCSSILNKYDDNVKAYFKRGKAHAAVWNAQEAQADFAKVLELDPALAPVVSRELRALETRIRQKDEEDKARFRGIFSH.

Residues 31 to 121 enclose the PPIase FKBP-type domain; sequence GTKATFHFRT…KDPLEGQRHC (91 aa). Ser-43 carries the phosphoserine modification. TPR repeat units follow at residues 179 to 212, 231 to 264, and 265 to 298; these read VPVIHQEGNRLYREGQVKEAAAKYYDAIACLKNL, TPLLLNYCQCKLVAQEYYEVLDHCSSILNKYDDN, and VKAYFKRGKAHAAVWNAQEAQADFAKVLELDPAL.

As to quaternary structure, interacts with RET in the pituitary gland; this interaction prevents the formation of the AIP-survivin complex.

The protein resides in the cytoplasm. Functionally, may play a positive role in AHR-mediated (aromatic hydrocarbon receptor) signaling, possibly by influencing its receptivity for ligand and/or its nuclear targeting. The protein is AH receptor-interacting protein (Aip) of Mus musculus (Mouse).